Here is a 345-residue protein sequence, read N- to C-terminus: NADH-quinone oxidoreductase subunit H (345 aa).

The Lumenal segment spans residues 1–15 (MADFWATSLGQTLIL). The helical transmembrane segment at 16–35 (LAQGLGIIAFVMIGLLLLVW) threads the bilayer. Over 36 to 86 (GDRKIWAAVQMRKGPNVVGAFGLLQSVADAAKYVFKEIVVPAGVDKPVYFL) the chain is Cytoplasmic. A helical membrane pass occupies residues 87–106 (APMLSLVLALLAWVVVPFNE). At 107 to 110 (GWVM) the chain is on the lumenal side. A helical membrane pass occupies residues 111–130 (ADINVAVLFVFAVSSLEVYG). The Cytoplasmic segment spans residues 131 to 156 (VIMGGWASNSKYPFLGSLRSAAQMIS). A helical transmembrane segment spans residues 157-176 (YEVSMGLIIVGVIISTGSMN). The Lumenal segment spans residues 177 to 191 (LSAIVEAQRGDFGLL). The chain crosses the membrane as a helical span at residues 192–211 (NWYWLPHLPMVALFFISALA). The Cytoplasmic segment spans residues 212–245 (ETNRPPFDLPEAESELVAGFMVEYSSTPYLLFMA). The helical transmembrane segment at 246–265 (GEYIAVWLMCALTSVLFFGG) threads the bilayer. Residues 266–276 (WLSPIPGVPDG) are Lumenal-facing. The chain crosses the membrane as a helical span at residues 277–296 (VLWMVAKMAAVFFVFAMVKA). The Cytoplasmic segment spans residues 297–313 (IVPRYRYDQLMRIGWKV). The chain crosses the membrane as a helical span at residues 314–333 (FLPLSLAWVVVVAFLAKFEV). Residues 334–345 (LGGFWARWSIGA) lie on the Lumenal side of the membrane.

This sequence belongs to the complex I subunit 1 family. As to quaternary structure, NDH-1 is composed of 14 different subunits. Subunits NuoA, H, J, K, L, M, N constitute the membrane sector of the complex.

The protein localises to the cellular chromatophore membrane. It carries out the reaction a quinone + NADH + 5 H(+)(in) = a quinol + NAD(+) + 4 H(+)(out). In terms of biological role, NDH-1 shuttles electrons from NADH, via FMN and iron-sulfur (Fe-S) centers, to quinones in the respiratory chain. The immediate electron acceptor for the enzyme in this species is believed to be ubiquinone. Couples the redox reaction to proton translocation (for every two electrons transferred, four hydrogen ions are translocated across the cytoplasmic membrane), and thus conserves the redox energy in a proton gradient. This subunit may bind ubiquinone. This chain is NADH-quinone oxidoreductase subunit H, found in Rhodobacter capsulatus (Rhodopseudomonas capsulata).